We begin with the raw amino-acid sequence, 359 residues long: Glycerol-3-phosphate dehydrogenase [NAD(P)+] (359 aa).

NADPH is bound by residues threonine 11, tryptophan 12, arginine 32, and lysine 107. Residues lysine 107 and glycine 138 each contribute to the sn-glycerol 3-phosphate site. NADPH is bound at residue alanine 142. Lysine 193, aspartate 246, serine 256, arginine 257, and asparagine 258 together coordinate sn-glycerol 3-phosphate. The active-site Proton acceptor is the lysine 193. Arginine 257 is a binding site for NADPH. NADPH contacts are provided by valine 281 and glutamate 283.

It belongs to the NAD-dependent glycerol-3-phosphate dehydrogenase family.

The protein resides in the cytoplasm. It catalyses the reaction sn-glycerol 3-phosphate + NAD(+) = dihydroxyacetone phosphate + NADH + H(+). The catalysed reaction is sn-glycerol 3-phosphate + NADP(+) = dihydroxyacetone phosphate + NADPH + H(+). It functions in the pathway membrane lipid metabolism; glycerophospholipid metabolism. Catalyzes the reduction of the glycolytic intermediate dihydroxyacetone phosphate (DHAP) to sn-glycerol 3-phosphate (G3P), the key precursor for phospholipid synthesis. This chain is Glycerol-3-phosphate dehydrogenase [NAD(P)+], found in Dehalococcoides mccartyi (strain ATCC BAA-2266 / KCTC 15142 / 195) (Dehalococcoides ethenogenes (strain 195)).